Reading from the N-terminus, the 459-residue chain is Protein U54 (459 aa).

An N-terminal signal peptide occupies residues 1-20 (MQPATLQWSSYVLQLRLTTA). 5 N-linked (GlcNAc...) asparagine; by host glycosylation sites follow: N76, N100, N281, N321, and N452.

The protein belongs to the herpesviridae UL82 family.

The sequence is that of Protein U54 (U54) from Homo sapiens (Human).